The chain runs to 595 residues: GPI mannosyltransferase 3 (595 aa).

A run of 10 helical transmembrane segments spans residues 58 to 78, 85 to 105, 128 to 148, 185 to 207, 212 to 232, 235 to 255, 260 to 280, 289 to 309, 319 to 339, and 413 to 433; these read YAFP…GVAT, LAHA…GVAA, GPRV…VLLV, FFAT…LYHW, GLDV…FACL, PTNV…LVRS, LLLT…CANI, GVLL…LAAF, LLQS…GALL, and VQSL…VLNT.

It belongs to the glycosyltransferase 22 family. PIGB subfamily.

Its subcellular location is the endoplasmic reticulum membrane. The protein operates within glycolipid biosynthesis; glycosylphosphatidylinositol-anchor biosynthesis. Its function is as follows. Mannosyltransferase involved in glycosylphosphatidylinositol-anchor biosynthesis. Transfers the third mannose to Man2-GlcN-acyl-PI during GPI precursor assembly. The polypeptide is GPI mannosyltransferase 3 (GPI10) (Eremothecium gossypii (strain ATCC 10895 / CBS 109.51 / FGSC 9923 / NRRL Y-1056) (Yeast)).